The chain runs to 83 residues: Exodeoxyribonuclease 7 small subunit (83 aa).

Belongs to the XseB family. Heterooligomer composed of large and small subunits.

The protein localises to the cytoplasm. The catalysed reaction is Exonucleolytic cleavage in either 5'- to 3'- or 3'- to 5'-direction to yield nucleoside 5'-phosphates.. In terms of biological role, bidirectionally degrades single-stranded DNA into large acid-insoluble oligonucleotides, which are then degraded further into small acid-soluble oligonucleotides. The chain is Exodeoxyribonuclease 7 small subunit from Bradyrhizobium diazoefficiens (strain JCM 10833 / BCRC 13528 / IAM 13628 / NBRC 14792 / USDA 110).